Here is an 83-residue protein sequence, read N- to C-terminus: Salivary thrombin inhibitor anophelin (83 aa).

Positions 1–22 (MANKLVLISLLCVVLVAKITQA) are cleaved as a signal peptide. Residues 25-51 (QYAPGDEPSYDEDTDDSDKLVENDTSI) form a disordered region. A glycan (N-linked (GlcNAc...) asparagine) is linked at Asn47. The interval 54 to 83 (EDYAAIEASLSETFNTAADPGRRLGEGSKP) is sufficient for host thrombin inhibition. The tract at residues 56–62 (YAAIEAS) is blocks exosite I of host thrombin. The tract at residues 64 to 83 (SETFNTAADPGRRLGEGSKP) is disordered. The blocks active site cleft of host thrombin in a reverse direction compared to substrates stretch occupies residues 72 to 75 (DPGR). Positions 73-83 (PGRRLGEGSKP) are enriched in basic and acidic residues.

It belongs to the anophelin family. In terms of assembly, interacts with human F2 (thrombin); the interaction results in thrombin inhibition. As to expression, salivary gland (at protein level).

It is found in the secreted. With respect to regulation, increasing concentration of NaCl decreases affinity for thrombin. Salivary protein with anticoagulant activity that inhibits host thrombin (F2); binds to the proteinase in a reverse orientation (opposite to substrates). Inhibits thrombin-induced platelet aggregation. This Anopheles albimanus (New world malaria mosquito) protein is Salivary thrombin inhibitor anophelin.